The primary structure comprises 603 residues: Probable L-gulonolactone oxidase 6 (603 aa).

The N-terminal stretch at M1–S35 is a signal peptide. An FAD-binding PCMH-type domain is found at S64–M246.

It belongs to the oxygen-dependent FAD-linked oxidoreductase family. Requires FAD as cofactor.

It catalyses the reaction L-gulono-1,4-lactone + O2 = L-ascorbate + H2O2 + H(+). The protein operates within cofactor biosynthesis; L-ascorbate biosynthesis. May be involved in the biosynthesis of ascorbic acid. The sequence is that of Probable L-gulonolactone oxidase 6 from Arabidopsis thaliana (Mouse-ear cress).